A 126-amino-acid polypeptide reads, in one-letter code: Large ribosomal subunit protein bL17 (126 aa).

Belongs to the bacterial ribosomal protein bL17 family. Part of the 50S ribosomal subunit. Contacts protein L32.

The protein is Large ribosomal subunit protein bL17 of Vibrio atlanticus (strain LGP32) (Vibrio splendidus (strain Mel32)).